The following is a 66-amino-acid chain: UPF0370 protein YpfN (66 aa).

A helical membrane pass occupies residues 4-24; it reads LAKYWWILVLVFLVGVLLNVI. The tract at residues 39–66 is disordered; the sequence is KPELPPHRDFNDKWDDEEDWPKKDQPKK. Residues 42 to 51 are compositionally biased toward basic and acidic residues; the sequence is LPPHRDFNDK.

It belongs to the UPF0370 family.

Its subcellular location is the cell membrane. This is UPF0370 protein YpfN from Salmonella paratyphi A (strain AKU_12601).